The following is a 252-amino-acid chain: MITKRIIPCLDVKDGRVVKGVQFVELKDAGDPVELAEVYDHEGADELVFLDISASHEGRKTMVDVVERVAAKLAIPFTVGGGINRLDDMKTILRAGADKVSVNTAAVLRPELITEGADFFGSQCIVVAIDAKYDPEADLYYVYTHGGRKKTNLEAVSWAKEAVRRGAGEILLTSMDSDGEKNGFDCRLTKLVSEAVSVPVIASGGAGRADHMYDAFAEGRADAALAASIFHYKETSVKEVKAYLKERGVNVR.

Active-site residues include D11 and D130.

Belongs to the HisA/HisF family. As to quaternary structure, heterodimer of HisH and HisF.

The protein resides in the cytoplasm. It catalyses the reaction 5-[(5-phospho-1-deoxy-D-ribulos-1-ylimino)methylamino]-1-(5-phospho-beta-D-ribosyl)imidazole-4-carboxamide + L-glutamine = D-erythro-1-(imidazol-4-yl)glycerol 3-phosphate + 5-amino-1-(5-phospho-beta-D-ribosyl)imidazole-4-carboxamide + L-glutamate + H(+). Its pathway is amino-acid biosynthesis; L-histidine biosynthesis; L-histidine from 5-phospho-alpha-D-ribose 1-diphosphate: step 5/9. IGPS catalyzes the conversion of PRFAR and glutamine to IGP, AICAR and glutamate. The HisF subunit catalyzes the cyclization activity that produces IGP and AICAR from PRFAR using the ammonia provided by the HisH subunit. The chain is Imidazole glycerol phosphate synthase subunit HisF from Bacillus licheniformis (strain ATCC 14580 / DSM 13 / JCM 2505 / CCUG 7422 / NBRC 12200 / NCIMB 9375 / NCTC 10341 / NRRL NRS-1264 / Gibson 46).